The sequence spans 335 residues: MGQSFSRWLERQWYGHTGWQLILRPFSWLFYILIALRRLAYRLRLFKSLKLSVPVIIVGNINVGGTGKTPFVIWLVQQLRQNGWYPGIISRGYGGKSIHTHQVTKDSLPQEVGDEPVLLVQRTGLPLYVGRKRTRAARHLLRDYPECNLIISDDGLQHYALERDMEIVIIDGERIFGNGQLLPAGPLREPSSRLEDVDAVVFNGGPPAAGGYLMQLIPEDLRKVSAPQERMALNELIGQHVHAVAGIGNPQRFFGQLEQLGLVVEAHPFPDHHAYTEDDFEFAKDDIVLMTEKDAVKCIAFARENWWFMPISAEIDRALAEKILARLTRLMEKEI.

An ATP-binding site is contributed by 62–69 (NVGGTGKT).

It belongs to the LpxK family.

It carries out the reaction a lipid A disaccharide + ATP = a lipid IVA + ADP + H(+). It participates in glycolipid biosynthesis; lipid IV(A) biosynthesis; lipid IV(A) from (3R)-3-hydroxytetradecanoyl-[acyl-carrier-protein] and UDP-N-acetyl-alpha-D-glucosamine: step 6/6. Its function is as follows. Transfers the gamma-phosphate of ATP to the 4'-position of a tetraacyldisaccharide 1-phosphate intermediate (termed DS-1-P) to form tetraacyldisaccharide 1,4'-bis-phosphate (lipid IVA). The protein is Tetraacyldisaccharide 4'-kinase of Methylobacillus flagellatus (strain ATCC 51484 / DSM 6875 / VKM B-1610 / KT).